Reading from the N-terminus, the 893-residue chain is MLSPQRALLCNLNHIHLQHVSLGLHLSRRPELREGPLSTPPPPGDTGGKESRGPCSGTLVDANSNSPAVPCRCCQEHGSSIENQQDPSQEEEAVSPSDPGCSSSLSSCSDLSPDESPVSVYSRDLPGNEDANPQPSTLELGSPLAPAGPSTCSPDSFCCSPDSCSGISSPPGPDLDSNCNALTTCQDLPSPGLEEEEDSGEQDLATSELSETEDGRIDAGKAEPSWKINPIWKIDTEKTEAGWKTIEDSDSGRKTDENTNSSLKTESGKLASCLNTNSGSKIDAGKTDGGWRGDVSQEPVPHRTITSFHELAQKRKRGPGLPLVPQAKKDRSDWLIVFSPDTELPPTGSLGGSLAPPREVTTFKELRSRSRAQPPPVPPRDPPAGWALVPPRPPPPPVPPRRKKNRLGLQPIAEGLSEEGRAASPRAGEEASASQEPEEPRAHAVVRSSWSFAGVPGAQRLWMAEAQSGTGQLQEQKKGLLIAVSASVDKIISHFGAARNLVQKAQLGDSRLSPDVGHLVLTTLCPALHALVADGLKPFRKDLITGQRRSSPWSVVEASVKPGSCTHSMGSLYSQVSRLAPLSSSRSRFHAFILGLLNTKQLELWFSSLQEDAGLLSLLYLPTGFFSLARGSCPSLATELLLLLQPLSVLTFHLDLLFEHHHHLPVGLQQAPAPSCPPPALQQTMQAVLHWGERLAQSLRGTSGESTTDSSTPSARPPAGSWWDQLTQASRVYASGGTEGFPLLRWGPRRHGTTAEAAQEAPPPTEQTTPGRSVWLGRLFGVPGCPSETESGAFKSRRPSSWLPPTVSVLALVKRGTPPETPPEALVSSPGSVVQADRAVRALCDHTAAGPDQLSFQRGELLRVIATVDEDWLRCGRDGVEGLVPVGYTSLVL.

Disordered stretches follow at residues 31-223, 237-332, 339-358, and 366-444; these read ELRE…GKAE, EKTE…KDRS, SPDTELPPTGSLGGSLAPPR, and LRSR…RAHA. Residues 77-87 are compositionally biased toward polar residues; that stretch reads HGSSIENQQDP. Low complexity-rich tracts occupy residues 95-117 and 149-165; these read SPSDPGCSSSLSSCSDLSPDESP and PSTCSPDSFCCSPDSCS. A compositionally biased stretch (polar residues) spans 177-187; that stretch reads SNCNALTTCQD. Residues 237–257 are compositionally biased toward basic and acidic residues; sequence EKTEAGWKTIEDSDSGRKTDE. 2 stretches are compositionally biased toward pro residues: residues 373–382 and 390–399; these read QPPPVPPRDP and PPRPPPPPVP. An interaction with TRAF6 region spans residues 463–598; the sequence is MAEAQSGTGQ…FHAFILGLLN (136 aa). The 145-residue stretch at 515–659 folds into the RUN domain; sequence DVGHLVLTTL…LTFHLDLLFE (145 aa). An interaction with IKBKG region spans residues 599-665; it reads TKQLELWFSS…LLFEHHHHLP (67 aa). Disordered stretches follow at residues 700-721 and 751-772; these read RGTSGESTTDSSTPSARPPAGS and HGTTAEAAQEAPPPTEQTTPGR. Composition is skewed to low complexity over residues 702-714 and 754-770; these read TSGESTTDSSTPS and TAEAAQEAPPPTEQTTP. The SH3 domain maps to 835-893; sequence QADRAVRALCDHTAAGPDQLSFQRGELLRVIATVDEDWLRCGRDGVEGLVPVGYTSLVL.

As to quaternary structure, associated component of the adapter-like complex 4 (AP-4). Interacts with IKBKG and TRAF6. Interacts with F-actin, acetylated actin, TUBB3, STX1A, KIF5B and KLC1. Post-translationally, phosphorylated on serine residues following nuclear translocation. In terms of processing, polyubiquitinated; polyubiquitination involves TRAF6. Expressed in brain, brain stem and spinal cord (at protein level).

The protein resides in the cytoplasm. Its subcellular location is the nucleus. It is found in the cytoskeleton. The protein localises to the cytoplasmic vesicle. It localises to the early endosome. The protein resides in the postsynaptic density. Its subcellular location is the golgi apparatus. In terms of biological role, associates with the adapter-like complex 4 (AP-4) and may therefore play a role in vesicular trafficking of proteins at the trans-Golgi network. Signaling adapter which plays a role in neuronal differentiation. Involved in regulation of NGF-dependent neurite outgrowth. May play a role in neuronal vesicular trafficking, specifically involving pre-synaptic membrane proteins. Seems to be involved in signaling pathways that are regulated by the prolonged activation of MAPK. Can regulate the polyubiquitination of IKBKG and thus may be involved in regulation of the NF-kappa-B pathway. In Mus musculus (Mouse), this protein is AP-4 complex accessory subunit RUSC1.